The chain runs to 151 residues: Large ribosomal subunit protein uL16 (151 aa).

The protein belongs to the universal ribosomal protein uL16 family. As to quaternary structure, part of the 50S ribosomal subunit.

Binds 23S rRNA and is also seen to make contacts with the A and possibly P site tRNAs. This chain is Large ribosomal subunit protein uL16, found in Chloroflexus aurantiacus (strain ATCC 29364 / DSM 637 / Y-400-fl).